The sequence spans 648 residues: Zinc finger protein grt1 (648 aa).

A DNA-binding region (zn(2)-C6 fungal-type) is located at residues 13-42 (ACENCRKRKVKCSGGDVCFECQKYNENCVY).

Monomer.

The protein resides in the nucleus. Functionally, may be involved in the facilitation of anaphase progression in mitosis. The sequence is that of Zinc finger protein grt1 (grt1) from Schizosaccharomyces pombe (strain 972 / ATCC 24843) (Fission yeast).